The sequence spans 1282 residues: Cytokine receptor (1282 aa).

The N-terminal stretch at 1–23 is a signal peptide; that stretch reads MVAQEQLVLLLMLLAGCRGGANA. Residues 24 to 889 lie on the Extracellular side of the membrane; sequence ILDPGWVIPS…CTPDTHSVKA (866 aa). Residues N44, N86, N87, and N114 are each glycosylated (N-linked (GlcNAc...) asparagine). C47 and C106 are disulfide-bonded. Fibronectin type-III domains are found at residues 124–220, 227–327, 329–431, 436–535, 537–631, 635–735, and 736–836; these read PLLV…NHFE, PGQN…TAPA, PRRP…SNRD, EPRN…KKDD, AKME…TGEA, QPRE…TAIG, and VPSP…LMST. C132 and C142 are oxidised to a cystine. 2 N-linked (GlcNAc...) asparagine glycosylation sites follow: N143 and N156. A disulfide bridge connects residues C173 and C183. N-linked (GlcNAc...) asparagine glycosylation is found at N184, N230, N235, N278, N298, N310, N376, N448, and N466. C472 and C482 are oxidised to a cystine. 8 N-linked (GlcNAc...) asparagine glycosylation sites follow: N568, N581, N626, N676, N703, N777, N790, and N862. A helical transmembrane segment spans residues 890–910; the sequence is MYQTIEVTVAILVLGVIFYLV. Residues 911 to 1282 lie on the Cytoplasmic side of the membrane; sequence YKKYRKMSDI…NAMAHNRHVL (372 aa). S976 is subject to Phosphoserine. 2 disordered regions span residues 989-1092 and 1238-1258; these read TASS…HTFS and TVGS…QHSR. Basic and acidic residues-rich tracts occupy residues 999 to 1009 and 1033 to 1064; these read VDRDGYDDNHE and NDRE…DREQ.

It belongs to the type I cytokine receptor family. In terms of assembly, interacts with wdp; the interaction promotes internalization of dome and its subsequent lysosomal degradation; thereby reducing JAK/STAT signaling. In terms of processing, undergoes lysosomal degradation. In terms of tissue distribution, in stage 11 embryos, tracheal pits show highest expression, at stage 14 high expression is detected in the posterior spiracles, gut and head.

Its subcellular location is the apicolateral cell membrane. In terms of biological role, critical for epithelial morphogenesis during oogenesis; border cell migration. Required in the germarium for the polarization of follicle cells during encapsulation of germline cells. Required for embryonic segmentation and trachea specification. Essential receptor molecule for upd and JAK/STAT signaling during oogenesis. This Drosophila melanogaster (Fruit fly) protein is Cytokine receptor (dome).